Reading from the N-terminus, the 322-residue chain is Transcription initiation factor IIB (322 aa).

2 repeat units span residues 125 to 213 (SLIN…VRDL) and 224 to 305 (NFVY…EIAQ).

Belongs to the TFIIB family.

Its function is as follows. Stabilizes TBP binding to an archaeal box-A promoter. Also responsible for recruiting RNA polymerase II to the pre-initiation complex (DNA-TBP-TFIIB). The protein is Transcription initiation factor IIB of Aeropyrum pernix (strain ATCC 700893 / DSM 11879 / JCM 9820 / NBRC 100138 / K1).